A 443-amino-acid polypeptide reads, in one-letter code: uncharacterized protein (443 aa).

The next 4 membrane-spanning stretches (helical) occupy residues 15-35 (IYAG…DGLA), 38-58 (LGMA…GPGS), 59-79 (AWQG…LSWL), and 181-201 (VVTA…IPAL). The tract at residues 231–270 (NFGIGNIGNANLGNGNIGNANLGSGNAGFFNFGNGNDGNT) is 4 X 10 AA approximate repeats.

This sequence belongs to the mycobacterial PPE family.

Its subcellular location is the cell membrane. This is an uncharacterized protein from Mycobacterium tuberculosis (strain ATCC 25618 / H37Rv).